A 935-amino-acid polypeptide reads, in one-letter code: Transmembrane channel-like protein 1 (935 aa).

Disordered stretches follow at residues Met1–Lys21 and Glu37–Leu204. Composition is skewed to basic and acidic residues over residues Glu37–Asp47, Arg54–His79, Asp109–Val136, Asn152–Glu163, and Pro172–Ser184. 10 helical membrane-spanning segments follow: residues Ser303 to Pro340, Arg392 to Glu423, Leu480 to Ser510, Trp523 to Leu550, Pro555 to Arg589, Trp633 to Leu670, Val690 to Tyr710, Leu714 to Cys736, Asn751 to Ser774, and Leu818 to Leu851. The segment covering Glu874 to Ser886 has biased composition (basic and acidic residues). Residues Glu874 to Arg935 are disordered. 2 stretches are compositionally biased toward polar residues: residues Ser899–Gly919 and Gln926–Arg935.

The protein belongs to the TMC family. Interacts specifically with isoform CD3 of PCDH15A (via cytoplasmic domain). As to expression, in adults, expression is restricted to the hair cells of inner ear and lateral line organ. Expressed at higher levels in the larval lateral-line neuromasts than in the larval inner ear. Expressed in the sensory hair cell patches of the ear at 4 days post fertilization (dpf).

It is found in the cell membrane. The enzyme catalyses Ca(2+)(in) = Ca(2+)(out). Its function is as follows. Pore-forming subunit of the mechanotransducer (MET) non-selective cation channel complex located at the tips of hair-cell stereocilia. Highly permeable to calcium and likely transports monovalent cations. In Danio rerio (Zebrafish), this protein is Transmembrane channel-like protein 1.